Consider the following 122-residue polypeptide: Protein POLR1D, isoform 2 (122 aa).

Met1 carries the post-translational modification N-acetylmethionine. The interval 48-122 (INTIKNTLPS…DKYEKRSNRR (75 aa)) is disordered. Residues 57 to 83 (SHKEQDHEQKEGDKEPAKSQAQKEENP) show a composition bias toward basic and acidic residues. Positions 84–96 (KKHRSHPYKHSFR) are enriched in basic residues. Ser104 carries the phosphoserine modification. Positions 110-122 (SSQDKYEKRSNRR) are enriched in basic and acidic residues.

This Homo sapiens (Human) protein is Protein POLR1D, isoform 2 (POLR1D).